The primary structure comprises 502 residues: T-complex protein 11-like X-linked protein 1 (502 aa).

A disordered region spans residues 1 to 36 (MPKTEETVLQNDPSVAENGAPEPKTPGQSQKSKSFC).

It belongs to the TCP11 family.

The chain is T-complex protein 11-like X-linked protein 1 from Homo sapiens (Human).